Consider the following 109-residue polypeptide: Co-chaperonin GroES (109 aa).

This sequence belongs to the GroES chaperonin family. Heptamer of 7 subunits arranged in a ring. Interacts with the chaperonin GroEL.

It is found in the cytoplasm. In terms of biological role, together with the chaperonin GroEL, plays an essential role in assisting protein folding. The GroEL-GroES system forms a nano-cage that allows encapsulation of the non-native substrate proteins and provides a physical environment optimized to promote and accelerate protein folding. GroES binds to the apical surface of the GroEL ring, thereby capping the opening of the GroEL channel. The protein is Co-chaperonin GroES of Methanosarcina acetivorans (strain ATCC 35395 / DSM 2834 / JCM 12185 / C2A).